The chain runs to 76 residues: Kappa-actitoxin-Avd4g (76 aa).

The signal sequence occupies residues 1 to 19 (MNKALFLCLVVLCAAVVFA). A propeptide spanning residues 20–31 (AEDLQKAKHAPF) is cleaved from the precursor. 3 disulfide bridges follow: Cys37/Cys72, Cys39/Cys65, and Cys55/Cys73.

The protein belongs to the sea anemone type 3 (BDS) potassium channel toxin family. As to expression, moderately expressed in the ectodermal tissue from the distal and proximal tentacles, body wall, and oral disk.

It is found in the secreted. Its subcellular location is the nematocyst. Functionally, blocks Kv3 voltage-gated potassium channels. Reduces blood pressure. This Anemonia viridis (Snakelocks anemone) protein is Kappa-actitoxin-Avd4g.